Reading from the N-terminus, the 205-residue chain is Glycerol-3-phosphate acyltransferase (205 aa).

At 1–3 the chain is on the periplasmic side; the sequence is MSA. A helical membrane pass occupies residues 4-24; sequence IAPGMILFAYLCGSISSAILV. At 25 to 52 the chain is on the cytoplasmic side; it reads CRIAGLPDPRESGSGNPGATNVLRIGGK. The helical transmembrane segment at 53 to 73 threads the bilayer; the sequence is GAAVAVLIFDILKGMLPVWGA. Residues 74–80 are Periplasmic-facing; the sequence is YALGITP. A helical transmembrane segment spans residues 81–101; the sequence is FWLGLIAIAACLGHIWPVFFG. Topologically, residues 102–111 are cytoplasmic; sequence FKGGKGVATA. A helical transmembrane segment spans residues 112–132; it reads FGAIAPIGWDLTGVIAGTWLL. Over 133 to 137 the chain is Periplasmic; it reads TVLLS. A helical transmembrane segment spans residues 138–158; that stretch reads GYSSLGAIVSALIAPFYVWWF. Topologically, residues 159-205 are cytoplasmic; the sequence is KPQFTFPVSMLSCLILLRHHDNIQRLWRRQETKIWTKLKKKREKESK.

Belongs to the PlsY family. Probably interacts with PlsX.

Its subcellular location is the cell inner membrane. The enzyme catalyses sn-glycerol 3-phosphate + an acyl-CoA = a 1-acyl-sn-glycero-3-phosphate + CoA. It carries out the reaction a fatty acyl-[ACP] + sn-glycerol 3-phosphate = a 1-acyl-sn-glycero-3-phosphate + holo-[ACP]. The protein operates within lipid metabolism; phospholipid metabolism. In terms of biological role, catalyzes the transfer of an acyl group from acyl-ACP to glycerol-3-phosphate (G3P) to form lysophosphatidic acid (LPA). This enzyme can also utilize acyl-CoA as fatty acyl donor, but not acyl-PO(4). The sequence is that of Glycerol-3-phosphate acyltransferase from Salmonella arizonae (strain ATCC BAA-731 / CDC346-86 / RSK2980).